The following is a 338-amino-acid chain: Biotin synthase (338 aa).

The 228-residue stretch at 45–272 folds into the Radical SAM core domain; it reads DEVQMSTLLS…QSVVRLSAGR (228 aa). Residues Cys-60, Cys-64, and Cys-67 each coordinate [4Fe-4S] cluster. Cys-104, Cys-135, Cys-195, and Arg-267 together coordinate [2Fe-2S] cluster.

Belongs to the radical SAM superfamily. Biotin synthase family. In terms of assembly, homodimer. The cofactor is [4Fe-4S] cluster. [2Fe-2S] cluster serves as cofactor.

The catalysed reaction is (4R,5S)-dethiobiotin + (sulfur carrier)-SH + 2 reduced [2Fe-2S]-[ferredoxin] + 2 S-adenosyl-L-methionine = (sulfur carrier)-H + biotin + 2 5'-deoxyadenosine + 2 L-methionine + 2 oxidized [2Fe-2S]-[ferredoxin]. The protein operates within cofactor biosynthesis; biotin biosynthesis; biotin from 7,8-diaminononanoate: step 2/2. Catalyzes the conversion of dethiobiotin (DTB) to biotin by the insertion of a sulfur atom into dethiobiotin via a radical-based mechanism. The sequence is that of Biotin synthase from Parvibaculum lavamentivorans (strain DS-1 / DSM 13023 / NCIMB 13966).